The primary structure comprises 137 residues: Phosphoinositide-interacting protein (137 aa).

Transmembrane regions (helical) follow at residues 56-76 (IVIM…TCLA) and 94-114 (PGFL…VPII).

Interacts with TRPV1.

The protein localises to the membrane. Its function is as follows. Regulatory subunit of TRPV1, a molecular sensor of noxious heat and capsaicin. Positively regulates TRPV1 channel activity via phosphatidylinositol 4,5-bisphosphate (PIP2). Binds various phosphoinositide, including phosphatidylinositol 4,5-bisphosphate (PIP2), but not phosphatidylinositol (PI). The protein is Phosphoinositide-interacting protein (PIRT) of Homo sapiens (Human).